We begin with the raw amino-acid sequence, 37 residues long: Myo-inositol-binding protein (37 aa).

This sequence belongs to the bacterial solute-binding protein 2 family.

The protein resides in the periplasm. The sequence is that of Myo-inositol-binding protein from Pseudomonas sp.